A 180-amino-acid chain; its full sequence is ATP synthase subunit delta, chloroplastic (180 aa).

Belongs to the ATPase delta chain family. F-type ATPases have 2 components, F(1) - the catalytic core - and F(0) - the membrane proton channel. F(1) has five subunits: alpha(3), beta(3), gamma(1), delta(1), epsilon(1). CF(0) has four main subunits: a(1), b(1), b'(1) and c(10-14). The alpha and beta chains form an alternating ring which encloses part of the gamma chain. F(1) is attached to F(0) by a central stalk formed by the gamma and epsilon chains, while a peripheral stalk is formed by the delta, b and b' chains.

The protein localises to the plastid. Its subcellular location is the chloroplast thylakoid membrane. In terms of biological role, f(1)F(0) ATP synthase produces ATP from ADP in the presence of a proton or sodium gradient. F-type ATPases consist of two structural domains, F(1) containing the extramembraneous catalytic core and F(0) containing the membrane proton channel, linked together by a central stalk and a peripheral stalk. During catalysis, ATP synthesis in the catalytic domain of F(1) is coupled via a rotary mechanism of the central stalk subunits to proton translocation. Its function is as follows. This protein is part of the stalk that links CF(0) to CF(1). It either transmits conformational changes from CF(0) to CF(1) or is implicated in proton conduction. The protein is ATP synthase subunit delta, chloroplastic of Emiliania huxleyi (Coccolithophore).